The primary structure comprises 335 residues: MDKAERDYWHLRSLEIEEEPRFPPTNVADPLTARNLFQLYVNTFIGANLAESCVFPLDVAKTRMQVDGEQAKKTGKAMPTFRATLTNMIRVEGFKSLYAGFSAMVTRNFIFNSLRVVLYDVFRRPFLYQNERNEEVLKIYMALGCSFTAGCIAQALANPFDIVKVRMQTEGRRRQLGYDVRVNSMVQAFVDIYRRGGLPSMWKGVGPSCMRACLMTTGDVGSYDISKRTFKRLLDLEEGLPLRFVSSMCAGLTASVLSTPADVIKSRMMNQPVDESGKNLYYKNSLDCVRKLVREEGVLTLYKGLMPTWFRLGPFSVLFWLSVEQLRQWEGQSGF.

3 Solcar repeats span residues 34 to 125 (RNLF…FRRP), 137 to 229 (LKIY…SKRT), and 238 to 329 (EGLP…LRQW). Helical transmembrane passes span 40–57 (YVNTFIGANLAESCVFPL), 100–118 (GFSAMVTRNFIFNSLRVVL), 138–157 (KIYMALGCSFTAGCIAQALA), 204–223 (GVGPSCMRACLMTTGDVGSY), 244–264 (FVSSMCAGLTASVLSTPADVI), and 304–323 (GLMPTWFRLGPFSVLFWLSV).

Belongs to the mitochondrial carrier (TC 2.A.29) family.

It is found in the mitochondrion inner membrane. Mitochondrial protein that is likely to be responsible for thermogenic respiration. Likely to function in mitochondrial uncoupling i.e. creating mitochondrial proton leaks across the inner mitochondrial membrane and can therefore dissipate the mitochondrial proton gradient and convert the energy of substrate oxidation into heat instead of ATP. Involved in cold tolerance, it is required for development to the adult stage at low temperatures. In Drosophila melanogaster (Fruit fly), this protein is Mitochondrial uncoupling protein 4C.